The following is a 394-amino-acid chain: Succinate--CoA ligase [ADP-forming] subunit beta (394 aa).

The region spanning 9 to 243 (KDILAGFGIA…YSQLNPLEIA (235 aa)) is the ATP-grasp domain. Residues Lys-45, 52–54 (GRG), Glu-98, Val-101, and Glu-106 contribute to the ATP site. The Mg(2+) site is built by Asn-198 and Asp-212. Substrate contacts are provided by residues Asn-263 and 320–322 (GIM).

It belongs to the succinate/malate CoA ligase beta subunit family. In terms of assembly, heterotetramer of two alpha and two beta subunits. It depends on Mg(2+) as a cofactor.

It carries out the reaction succinate + ATP + CoA = succinyl-CoA + ADP + phosphate. The catalysed reaction is GTP + succinate + CoA = succinyl-CoA + GDP + phosphate. Its pathway is carbohydrate metabolism; tricarboxylic acid cycle; succinate from succinyl-CoA (ligase route): step 1/1. Its function is as follows. Succinyl-CoA synthetase functions in the citric acid cycle (TCA), coupling the hydrolysis of succinyl-CoA to the synthesis of either ATP or GTP and thus represents the only step of substrate-level phosphorylation in the TCA. The beta subunit provides nucleotide specificity of the enzyme and binds the substrate succinate, while the binding sites for coenzyme A and phosphate are found in the alpha subunit. This Pelobacter propionicus (strain DSM 2379 / NBRC 103807 / OttBd1) protein is Succinate--CoA ligase [ADP-forming] subunit beta.